A 262-amino-acid polypeptide reads, in one-letter code: Glycine and serine-rich protein 1 (262 aa).

The signal sequence occupies residues 1 to 21; that stretch reads MVIKTSLTVLILGVLIAEVFC. A glycan (N-linked (GlcNAc...) asparagine) is linked at asparagine 59. A disordered region spans residues 172-212; sequence SNGGWGAETGSSGGMNSQSSGSQSGSWGSSSGSWGGSSGSM. Over residues 174-184 the composition is skewed to gly residues; it reads GGWGAETGSSG. Residues 185-203 show a composition bias toward low complexity; the sequence is GMNSQSSGSQSGSWGSSSG.

Component of the acid-insoluble and acid-soluble organic matrix of calcified layers of the shell (at protein level).

It is found in the secreted. In Lottia gigantea (Giant owl limpet), this protein is Glycine and serine-rich protein 1.